Consider the following 1287-residue polypeptide: DNA-directed RNA polymerase subunit beta (1287 aa).

It belongs to the RNA polymerase beta chain family. The RNAP catalytic core consists of 2 alpha, 1 beta, 1 beta' and 1 omega subunit. When a sigma factor is associated with the core the holoenzyme is formed, which can initiate transcription.

The catalysed reaction is RNA(n) + a ribonucleoside 5'-triphosphate = RNA(n+1) + diphosphate. Functionally, DNA-dependent RNA polymerase catalyzes the transcription of DNA into RNA using the four ribonucleoside triphosphates as substrates. The sequence is that of DNA-directed RNA polymerase subunit beta from Mycoplasma capricolum subsp. capricolum (strain California kid / ATCC 27343 / NCTC 10154).